A 380-amino-acid polypeptide reads, in one-letter code: Glucose-1-phosphate adenylyltransferase (380 aa).

Residues glycine 164, 179-180 (EK), and serine 190 each bind alpha-D-glucose 1-phosphate.

The protein belongs to the bacterial/plant glucose-1-phosphate adenylyltransferase family. In terms of assembly, homotetramer.

It catalyses the reaction alpha-D-glucose 1-phosphate + ATP + H(+) = ADP-alpha-D-glucose + diphosphate. Its pathway is glycan biosynthesis; glycogen biosynthesis. Functionally, involved in the biosynthesis of ADP-glucose, a building block required for the elongation reactions to produce glycogen. Catalyzes the reaction between ATP and alpha-D-glucose 1-phosphate (G1P) to produce pyrophosphate and ADP-Glc. The chain is Glucose-1-phosphate adenylyltransferase from Streptococcus pneumoniae serotype 2 (strain D39 / NCTC 7466).